The chain runs to 440 residues: Probable exopolygalacturonase C (440 aa).

The N-terminal stretch at 1–21 is a signal peptide; it reads MLITNPALLGILASLAPLALG. Asn-24, Asn-84, Asn-151, and Asn-219 each carry an N-linked (GlcNAc...) asparagine glycan. PbH1 repeat units follow at residues 217–238 and 240–261; these read GTNI…AVNT and SHNI…SIGS. Asp-231 acts as the Proton donor in catalysis. Residue His-255 is part of the active site. The N-linked (GlcNAc...) asparagine glycan is linked to Asn-271. The stretch at 272 to 293 is one PbH1 3 repeat; that stretch reads ITNLRFEDVTVIDALYAARFKS. N-linked (GlcNAc...) asparagine glycans are attached at residues Asn-313 and Asn-350. Cys-389 and Cys-395 are oxidised to a cystine. Asn-434 is a glycosylation site (N-linked (GlcNAc...) asparagine).

It belongs to the glycosyl hydrolase 28 family.

Its subcellular location is the secreted. The catalysed reaction is [(1-&gt;4)-alpha-D-galacturonosyl](n) + H2O = alpha-D-galacturonate + [(1-&gt;4)-alpha-D-galacturonosyl](n-1). Specific in hydrolyzing the terminal glycosidic bond of polygalacturonic acid and oligogalacturonates. In Neosartorya fischeri (strain ATCC 1020 / DSM 3700 / CBS 544.65 / FGSC A1164 / JCM 1740 / NRRL 181 / WB 181) (Aspergillus fischerianus), this protein is Probable exopolygalacturonase C (pgxC).